A 1181-amino-acid chain; its full sequence is Sodium/potassium/calcium exchanger 1 (1181 aa).

Over 1–419 (MGKLIRMGTQ…DLFSVEDRRQ (419 aa)) the chain is Extracellular. Disordered stretches follow at residues 107-232 (AMED…TSLK), 255-276 (SLVG…STTP), and 300-323 (STPA…GTST). Positions 124–136 (SLKNNYSPTTAGT) are enriched in polar residues. Asparagine 271 is a glycosylation site (N-linked (GlcNAc...) asparagine). Positions 301–311 (TPATTEGSTAA) are enriched in polar residues. Residues 420–440 (GWVVLHIFGMTYVFVALAIVC) form a helical membrane-spanning segment. Residues 441–464 (DEYFVPALGVITDKLQISEDVAGA) lie on the Cytoplasmic side of the membrane. The Alpha-1 repeat unit spans residues 461-501 (VAGATFMAAGGSAPELFTSLIGVFISHSNVGIGTIVGSAVF). The chain crosses the membrane as a helical span at residues 465–485 (TFMAAGGSAPELFTSLIGVFI). Over 486–491 (SHSNVG) the chain is Extracellular. The helical transmembrane segment at 492–512 (IGTIVGSAVFNILFVIGTCAL) threads the bilayer. Topologically, residues 513 to 519 (FSREILN) are cytoplasmic. A helical membrane pass occupies residues 520–544 (LTWWPLFRDVSFYILDLSMLIVFFL). Over 545–552 (DSLIAWWE) the chain is Extracellular. Residues 553–569 (SLLLLLAYALYVFTMKW) form a helical membrane-spanning segment. The Cytoplasmic segment spans residues 570 to 989 (NKQIERWVKE…SLEWPESRQK (420 aa)). Residues 598-617 (PSDGAIEENEQQDNKKLKLP) are disordered. A Phosphoserine modification is found at serine 625. Residues 650 to 983 (GEARPSKDKQ…ESEEPLSLEW (334 aa)) are disordered. Residue threonine 690 is modified to Phosphothreonine. A compositionally biased stretch (acidic residues) spans 701–715 (GDQEEDPGCQEDVDE). 14 tandem repeats follow at residues 730-741 (ETEAEGKKDEEG), 742-754 (ETEA…GQEE), 755-766 (ETETKGKEKQEG), 767-778 (ETESEGKDEQEG), 779-791 (ETEA…DHEG), 792-804 (ETEA…EHEG), 805-817 (ETEA…EQEG), 818-830 (ETEA…EQEG), 831-843 (ETEA…EHEV), 844-856 (ETEA…NHEG), 857-869 (ETEA…DHEG), 870-881 (ETEAEGNVEHQG), 882-893 (ETEAEGKVEHEG), and 894-905 (ETEAGEKDEHEG). 3 stretches are compositionally biased toward basic and acidic residues: residues 730–750 (ETEA…RKED), 757–775 (ETKG…GKDE), and 782–805 (AEGK…HEGE). A 14 X approximate tandem repeats region spans residues 730–905 (ETEAEGKKDE…EAGEKDEHEG (176 aa)). A compositionally biased stretch (acidic residues) spans 806-820 (TEAEGTEDEQEGETE). Basic and acidic residues predominate over residues 834–906 (AEGKEVEHEV…AGEKDEHEGQ (73 aa)). Composition is skewed to acidic residues over residues 921–931 (GEAEANAEDQC) and 949–979 (GDSE…EEPL). A helical transmembrane segment spans residues 990–1010 (QAIYLFLLPIVFPLWLTIPDV). Residues 1011 to 1017 (RRQEARK) lie on the Extracellular side of the membrane. Residues 1018–1038 (FFVITFLGSIIWIAMFSYLMV) form a helical membrane-spanning segment. Over 1039 to 1053 (WWAHQVGETIGISEE) the chain is Cytoplasmic. Residues 1054 to 1074 (IMGLTILAAGTSIPDLITSVI) form a helical membrane-spanning segment. The stretch at 1061–1092 (AAGTSIPDLITSVIVARKGLGDMAVSSSVGSN) is one Alpha-2 repeat. Residues 1075–1092 (VARKGLGDMAVSSSVGSN) lie on the Extracellular side of the membrane. The chain crosses the membrane as a helical span at residues 1093–1113 (IFDITVGLPVPWLLFSLINAL). Topologically, residues 1114–1121 (QPIPVSSN) are cytoplasmic. Residues 1122–1142 (GLFCAIVLLFLMLLFVIFSIA) form a helical membrane-spanning segment. Over 1143-1150 (SCKWRMNK) the chain is Extracellular. The helical transmembrane segment at 1151-1171 (ILGFTMFLLYFVFLVISVMLE) threads the bilayer. Residues 1172 to 1181 (DRIISCPVSV) are Cytoplasmic-facing.

This sequence belongs to the Ca(2+):cation antiporter (CaCA) (TC 2.A.19) family. SLC24A subfamily. Post-translationally, the uncleaved signal sequence is required for efficient membrane targeting and proper membrane integration and topology. Highly expressed in the eye.

It localises to the cell membrane. It catalyses the reaction Ca(2+)(out) + K(+)(out) + 4 Na(+)(in) = Ca(2+)(in) + K(+)(in) + 4 Na(+)(out). Calcium, potassium:sodium antiporter that transports 1 Ca(2+) and 1 K(+) in exchange for 4 Na(+). Critical component of the visual transduction cascade, controlling the calcium concentration of outer segments during light and darkness. Light causes a rapid lowering of cytosolic free calcium in the outer segment of both retinal rod and cone photoreceptors and the light-induced lowering of calcium is caused by extrusion via this protein which plays a key role in the process of light adaptation. This chain is Sodium/potassium/calcium exchanger 1 (Slc24a1), found in Rattus norvegicus (Rat).